Consider the following 526-residue polypeptide: Bifunctional purine biosynthesis protein PurH (526 aa).

One can recognise an MGS-like domain in the interval 1–145; it reads MIRTALLSVS…KNHQDVTVLI (145 aa).

It belongs to the PurH family.

It carries out the reaction (6R)-10-formyltetrahydrofolate + 5-amino-1-(5-phospho-beta-D-ribosyl)imidazole-4-carboxamide = 5-formamido-1-(5-phospho-D-ribosyl)imidazole-4-carboxamide + (6S)-5,6,7,8-tetrahydrofolate. The catalysed reaction is IMP + H2O = 5-formamido-1-(5-phospho-D-ribosyl)imidazole-4-carboxamide. The protein operates within purine metabolism; IMP biosynthesis via de novo pathway; 5-formamido-1-(5-phospho-D-ribosyl)imidazole-4-carboxamide from 5-amino-1-(5-phospho-D-ribosyl)imidazole-4-carboxamide (10-formyl THF route): step 1/1. Its pathway is purine metabolism; IMP biosynthesis via de novo pathway; IMP from 5-formamido-1-(5-phospho-D-ribosyl)imidazole-4-carboxamide: step 1/1. The sequence is that of Bifunctional purine biosynthesis protein PurH from Polynucleobacter asymbioticus (strain DSM 18221 / CIP 109841 / QLW-P1DMWA-1) (Polynucleobacter necessarius subsp. asymbioticus).